Here is a 337-residue protein sequence, read N- to C-terminus: DNA-directed RNA polymerase subunit alpha (337 aa).

An alpha N-terminal domain (alpha-NTD) region spans residues 1–233 (MVREDVVGST…DLLIPFLHAE (233 aa)). The alpha C-terminal domain (alpha-CTD) stretch occupies residues 265–337 (KGIPLTCIFI…FAINLLNKKL (73 aa)).

It belongs to the RNA polymerase alpha chain family. In terms of assembly, in plastids the minimal PEP RNA polymerase catalytic core is composed of four subunits: alpha, beta, beta', and beta''. When a (nuclear-encoded) sigma factor is associated with the core the holoenzyme is formed, which can initiate transcription.

Its subcellular location is the plastid. The protein resides in the chloroplast. It catalyses the reaction RNA(n) + a ribonucleoside 5'-triphosphate = RNA(n+1) + diphosphate. DNA-dependent RNA polymerase catalyzes the transcription of DNA into RNA using the four ribonucleoside triphosphates as substrates. The protein is DNA-directed RNA polymerase subunit alpha of Phalaenopsis aphrodite subsp. formosana (Moth orchid).